A 231-amino-acid polypeptide reads, in one-letter code: Large ribosomal subunit protein uL1 (231 aa).

This sequence belongs to the universal ribosomal protein uL1 family. In terms of assembly, part of the 50S ribosomal subunit.

In terms of biological role, binds directly to 23S rRNA. The L1 stalk is quite mobile in the ribosome, and is involved in E site tRNA release. Its function is as follows. Protein L1 is also a translational repressor protein, it controls the translation of the L11 operon by binding to its mRNA. This chain is Large ribosomal subunit protein uL1, found in Staphylococcus carnosus (strain TM300).